A 344-amino-acid polypeptide reads, in one-letter code: MRKLFLDAFGEKKLDKPPVWIMRQAGRYLPEYRAVRAKFDNFMDMCRNADACCEVALHPLQRYDLDAAIVFSDILTIPEAMGMDLKFIKGTGPVFSEPIQSQKDLDKLKSIEDSIGSLDYVYNAVKTTSSAINVPLIGFTGSPWTLAAYMIEGSGSKQFNKLRKMMYANPQLMHSLLQRLADITIIYLLEQVKAGASSVMIFDTWGGILPLEHYKNFSLKYMEYIAKNVKQKINIPIVFFTKGGSNFFEEIKDKSCDGVGVDWSVTLKQARHRIGVGKVLQGNFDPAFLYGSKQSIRETVRANIEFIQSDKLNNYIVNLGHGIYPDIDPDSVRVMIDAIREFSA.

Substrate contacts are provided by residues 23–27 (RQAGR), Asp-73, Tyr-149, Thr-204, and His-321.

Belongs to the uroporphyrinogen decarboxylase family. As to quaternary structure, homodimer.

The protein resides in the cytoplasm. The enzyme catalyses uroporphyrinogen III + 4 H(+) = coproporphyrinogen III + 4 CO2. It functions in the pathway porphyrin-containing compound metabolism; protoporphyrin-IX biosynthesis; coproporphyrinogen-III from 5-aminolevulinate: step 4/4. In terms of biological role, catalyzes the decarboxylation of four acetate groups of uroporphyrinogen-III to yield coproporphyrinogen-III. In Francisella tularensis subsp. tularensis (strain FSC 198), this protein is Uroporphyrinogen decarboxylase.